The primary structure comprises 278 residues: HTH-type transcriptional activator RhaS (278 aa).

In terms of domain architecture, HTH araC/xylS-type spans 174–272; the sequence is NQLMAWLEDH…NWSPRDIRQG (99 aa). 2 consecutive DNA-binding regions (H-T-H motif) follow at residues 191–212 and 239–262; these read EAVA…KQHT and VTEI…RREF.

In terms of assembly, binds DNA as a dimer.

It is found in the cytoplasm. Functionally, activates expression of the rhaBAD and rhaT operons. The sequence is that of HTH-type transcriptional activator RhaS from Salmonella dublin (strain CT_02021853).